A 423-amino-acid chain; its full sequence is ATP-dependent RNA helicase RhlB (423 aa).

The Q motif motif lies at 9–37 (LRFSDLPLHHQVLAALQEKGFDYCTPIQA). Residues 40–217 (LPMSLAGKDV…FEDMNDPEYV (178 aa)) form the Helicase ATP-binding domain. 53–60 (AQTGTGKT) lines the ATP pocket. The DEAD box motif lies at 163–166 (DEAD). A Helicase C-terminal domain is found at 241–388 (KMALLLTLLE…VSQYDVAALL (148 aa)). Residues 397 to 423 (KRGNNNSKNSANSNRTFQKKRSLKRNF) form a disordered region. A compositionally biased stretch (low complexity) spans 400–410 (NNNSKNSANSN). Positions 413–423 (FQKKRSLKRNF) are enriched in basic residues.

Belongs to the DEAD box helicase family. RhlB subfamily. As to quaternary structure, component of the RNA degradosome, which is a multiprotein complex involved in RNA processing and mRNA degradation.

The protein localises to the cytoplasm. The enzyme catalyses ATP + H2O = ADP + phosphate + H(+). Functionally, DEAD-box RNA helicase involved in RNA degradation. Has RNA-dependent ATPase activity and unwinds double-stranded RNA. The polypeptide is ATP-dependent RNA helicase RhlB (Pasteurella multocida (strain Pm70)).